Consider the following 295-residue polypeptide: Formamidopyrimidine-DNA glycosylase (295 aa).

Proline 2 functions as the Schiff-base intermediate with DNA in the catalytic mechanism. Glutamate 3 functions as the Proton donor in the catalytic mechanism. Catalysis depends on lysine 61, which acts as the Proton donor; for beta-elimination activity. Positions 95, 117, and 159 each coordinate DNA. Residues 245-279 (HAYGREGEACERCGTPIRRVAFMNRSSYFCPVCQP) form an FPG-type zinc finger. The Proton donor; for delta-elimination activity role is filled by arginine 269.

This sequence belongs to the FPG family. Monomer. Zn(2+) serves as cofactor.

It carries out the reaction Hydrolysis of DNA containing ring-opened 7-methylguanine residues, releasing 2,6-diamino-4-hydroxy-5-(N-methyl)formamidopyrimidine.. The catalysed reaction is 2'-deoxyribonucleotide-(2'-deoxyribose 5'-phosphate)-2'-deoxyribonucleotide-DNA = a 3'-end 2'-deoxyribonucleotide-(2,3-dehydro-2,3-deoxyribose 5'-phosphate)-DNA + a 5'-end 5'-phospho-2'-deoxyribonucleoside-DNA + H(+). In terms of biological role, involved in base excision repair of DNA damaged by oxidation or by mutagenic agents. Acts as a DNA glycosylase that recognizes and removes damaged bases. Has a preference for oxidized purines, such as 7,8-dihydro-8-oxoguanine (8-oxoG). Has AP (apurinic/apyrimidinic) lyase activity and introduces nicks in the DNA strand. Cleaves the DNA backbone by beta-delta elimination to generate a single-strand break at the site of the removed base with both 3'- and 5'-phosphates. The polypeptide is Formamidopyrimidine-DNA glycosylase (Nocardioides sp. (strain ATCC BAA-499 / JS614)).